Reading from the N-terminus, the 87-residue chain is Putative autophagy-related protein 8E (87 aa).

The segment covering 1–14 (MEERRKEKGKEGRR) has biased composition (basic and acidic residues). Residues 1–30 (MEERRKEKGKEGRRGKATGHSVDKFSRSNL) form a disordered region. Residue Gly87 is the site of Phosphatidylethanolamine amidated glycine attachment.

It belongs to the ATG8 family. In terms of assembly, interacts with ATG4. In terms of processing, the C-terminal Gly is amidated with phosphatidylethanolamine by an activating system similar to that for ubiquitin.

The protein resides in the cytoplasmic vesicle. It localises to the autophagosome membrane. It is found in the vacuole membrane. Its subcellular location is the cytoplasm. The protein localises to the cytoskeleton. Functionally, ubiquitin-like modifier involved in autophagosomes formation. May mediate the delivery of the autophagosomes to the vacuole via the microtubule cytoskeleton. The polypeptide is Putative autophagy-related protein 8E (ATG8E) (Oryza sativa subsp. japonica (Rice)).